The chain runs to 613 residues: Dihydroxy-acid dehydratase (613 aa).

D81 contributes to the Mg(2+) binding site. [2Fe-2S] cluster is bound at residue C122. Residues D123 and K124 each contribute to the Mg(2+) site. Residue K124 is modified to N6-carboxylysine. C193 provides a ligand contact to [2Fe-2S] cluster. E489 is a Mg(2+) binding site. Residue S515 is the Proton acceptor of the active site.

It belongs to the IlvD/Edd family. In terms of assembly, homodimer. Requires [2Fe-2S] cluster as cofactor. Mg(2+) serves as cofactor.

It catalyses the reaction (2R)-2,3-dihydroxy-3-methylbutanoate = 3-methyl-2-oxobutanoate + H2O. The enzyme catalyses (2R,3R)-2,3-dihydroxy-3-methylpentanoate = (S)-3-methyl-2-oxopentanoate + H2O. It participates in amino-acid biosynthesis; L-isoleucine biosynthesis; L-isoleucine from 2-oxobutanoate: step 3/4. Its pathway is amino-acid biosynthesis; L-valine biosynthesis; L-valine from pyruvate: step 3/4. In terms of biological role, functions in the biosynthesis of branched-chain amino acids. Catalyzes the dehydration of (2R,3R)-2,3-dihydroxy-3-methylpentanoate (2,3-dihydroxy-3-methylvalerate) into 2-oxo-3-methylpentanoate (2-oxo-3-methylvalerate) and of (2R)-2,3-dihydroxy-3-methylbutanoate (2,3-dihydroxyisovalerate) into 2-oxo-3-methylbutanoate (2-oxoisovalerate), the penultimate precursor to L-isoleucine and L-valine, respectively. In Pseudomonas putida (strain ATCC 700007 / DSM 6899 / JCM 31910 / BCRC 17059 / LMG 24140 / F1), this protein is Dihydroxy-acid dehydratase.